The chain runs to 264 residues: tRNA (guanine-N(1)-)-methyltransferase (264 aa).

Residues glycine 120 and isoleucine 140 to leucine 145 contribute to the S-adenosyl-L-methionine site.

Belongs to the RNA methyltransferase TrmD family. As to quaternary structure, homodimer.

The protein resides in the cytoplasm. It catalyses the reaction guanosine(37) in tRNA + S-adenosyl-L-methionine = N(1)-methylguanosine(37) in tRNA + S-adenosyl-L-homocysteine + H(+). Its function is as follows. Specifically methylates guanosine-37 in various tRNAs. This is tRNA (guanine-N(1)-)-methyltransferase from Halorhodospira halophila (strain DSM 244 / SL1) (Ectothiorhodospira halophila (strain DSM 244 / SL1)).